The following is a 385-amino-acid chain: Tyrosine--tRNA ligase 1, cytoplasmic (385 aa).

The 'HIGH' region signature appears at 77–85 (PSGRMHIAQ). Positions 200, 204, 207, and 222 each coordinate L-tyrosine. The 'KMSKS' region motif lies at 259 to 263 (KMSKS). Lys-262 is an ATP binding site.

This sequence belongs to the class-I aminoacyl-tRNA synthetase family.

It localises to the cytoplasm. The protein resides in the cytosol. It catalyses the reaction tRNA(Tyr) + L-tyrosine + ATP = L-tyrosyl-tRNA(Tyr) + AMP + diphosphate + H(+). Its function is as follows. Catalyzes the attachment of tyrosine to tRNA(Tyr) in a two-step reaction: tyrosine is first activated by ATP to form Tyr-AMP and then transferred to the acceptor end of tRNA(Tyr). In Arabidopsis thaliana (Mouse-ear cress), this protein is Tyrosine--tRNA ligase 1, cytoplasmic.